The chain runs to 2515 residues: MNGQARIALPSKVDLYITHVDHVGPYLKVYGHVNRDAASLISERIRNLLPTCFAIEPSWSVERQQALLIPGTFCIFKNINGPAPGDVEYRRIRVVSADLEGQSMRAEIDFVDFGYKRTVDSHDLMFPKQPKLLQNIPLHCFQYIVLGICSEWDQTDLAEVRRLVVNQIVKITVEPTQICDQKFASLRWKDFELNEFLVQQKQIGVSVDKQLMMDHCKKLWKDNPQSPVTEYNNNSIHNSKTPMEIAREQLAVRQSLAARLDAQRSVQVTPSRPLNADAPDYTPKHLPLVNVTNVQVQMPGLNNTQKPVFVSTNPYNRANYQPAVPAAQPYVPKANPRSQYTYYNVRMNKPINAMPPPAGPHVPIQHFNQQANNVSLSYVPARFTPPPTPSIAQHQIPIPAFRTTSLTVGLTYDVVISYVENGPYLFWVHLKSSDHDLSTMMGQIERTKLKALAQAPELGTACVARFSEDGHLYRAMVCAVYAQRYRVVYVDYGNSELLSASDLFQIPPELLEIKPFAFRFALAGTKEIEPIDDSMKRIFKKSAIYRNFELTVQAPESVGSMQTCHLNQNGTNMLELLRQLKNSRQSYKKAEQLENDDAVEIRFIDSPSNFYVQKVANIGKFEQLMDEMFSYYNANQRVPDQLILGAPCIVKCDQEWYRAEILRVDDSVIVRHVDFGYEQNVKRHLIGHIAEKHLEMPRQAIKCCLKGFENSELSEDKITDQFEMLAEESNIRRRTFSVRIFRIEPDGLNVVNLLAKNLNVMKKLYKLSMPFEQYLSLEKGQFNANNTRAESVISSELNKSHILNSTSIGETENRLQEQEKEQQQKKVDVRQQQLAVEIPQAVKSVSGSKNSTDWDKRSSTSAGSKDSKRQQQQQIQRIDRHLDFSCETQSTGSYSSGMSSPRKGNRQQNGRTPIQSPRHNEKQEAKKNARFSNSESPRRSRDGQQGNQRSQNAPQGYAQKPQRQKSTLDGNISSKRSSGVGSDIASSSSESVAAAKPEKYVSLDKPYALQEMKTPSKEAASLSWWLSPFQFYIVPKSVSAKYDNIMRDMREFYRQKQHQPLQLKVGSTVVVRQRKDNAILRATVTACNHMMRKYRVFCVDTGSLITVTSEDIWQLEQRFADPPCMAHRCSFHSVVTNYDPLYIVDRMETFVPVNAKVDCEFVSKEKSNQGSNTSSTCSYTVNIFVNGASLRDMLVKAEFLTEVAPEIRVNLLAGQQIRGKFTSIRDMTSFKVQFDYGNNVNFLCTYDDAKFVKSNPNLARRFKEFYEGKSFALNVKNVCENNIVHLRPVMPLFMEDRRSFICPYPVVLSSFQALVVYTAKPYRVYVQPQAIVPSMQTLLDNMYEHYKAKGDSLKKFDVGQICAVRSSDGNWYRARISGKDSNAACFEVFYIDYGNTEEIKRDDIKALDAKFYEHASGFAVEINLPIGRPSNDTKLKARISEILEEKVVTIKSIEVRRSHLIADVILENNQSVIDLLKAEKLVPGKDLDYMRKQMEKGKSRTYEYIETVDLTLDEEEDKGRKETVSKSGSANASPKKKQHNDKDREPKKSKPAEPARTVAPQPVALKTPSPVPAEPAPVPKPATPVPEVVEVPEINPTVREAAAESKQAPAQEDPYKDLDCVVLSHCDNPAQFYVHPIDQLSKLNQLHENLQIVSPSLPQLMNVVNGADCVSMYSVDKCWYRAKIIDAELMVLLFIDYGNTDCVSDATDIKESMWSHIEPFCLPCALPIRPKGTADWVDAANGIFNESYSKVPRLEYLTQGDHYTTSYVNMYIDGEDVAKKLIADGFARPLEYLASGCSCYISHVNGICDFFIQLERDSKALELIELYLRKKDTLKPLEGFEKGLIVAALFEDDELWYRAQLQKELPDSRYEVLFIDYGNTSTTSKCLMLSEEIASLPSLSKKCSLQLPDAYISWSPEAEAKFAELTGEGELVFTTQLLKPGQDHVTIDLLLDGENIIDRLLPLCQRKEPKEASKESLAVTTKAIITHVENTSRIYLQFSEKDSLMDIICEKLNGSKLQPKTEKAAVDDMCVVQFADDLEFYRSRILEVLEDDQYKVILIDYGNTTVVDKLYELPQEFTLIKPVAEICSMEPSAIFEKNKALTLTTFDALLDSCKGVVAVEFVNKSASPPVVRLTTKDKRSLKIYEHLQKLVQAELKLIQKRNENSECIISYGNSPKSFYVQMKHNSADLDLIVKTLQSLKKEKLKKLIDPTTNSNGVCYSQEDACYYRCSIKSVLDPSQGFEVFLLDYGNTLVVPEVWQLPQEIEPIPSLALHCQLSKIPMDVSDEKLEEAFAALLEQHFGELYEITTQPNEDETKPLIAELRINYKDFVQELVSTVTGVQKPLEAELHNCVVVQFDGPMSFYVQMESDVPALEQMTDKLLDAEQDLPAFSDLKEGALCVAQFPEDEVFYRAQIRKVLDDGKCEVHFIDFGNNAVTQQFRQLPEELAKPARYSRHCELDASTISKCDAALLQSFIDTRFSETFQVEILATKGTGTHVVRLFYQSKNISEKLQECQ.

Serine 226, serine 235, and serine 239 each carry phosphoserine. Tudor domains follow at residues 455 to 513 (APEL…LLEI) and 641 to 696 (QLIL…HLEM). The residue at position 800 (serine 800) is a Phosphoserine. The interval 840–996 (QAVKSVSGSK…SSSESVAAAK (157 aa)) is disordered. Residues 890–900 (STGSYSSGMSS) show a composition bias toward low complexity. Polar residues predominate over residues 906 to 917 (RQQNGRTPIQSP). Basic and acidic residues predominate over residues 918–927 (RHNEKQEAKK). Polar residues-rich tracts occupy residues 943 to 954 (GQQGNQRSQNAP) and 964 to 976 (QKST…SSKR). Residues 977–995 (SSGVGSDIASSSSESVAAA) are compositionally biased toward low complexity. 2 Tudor domains span residues 1062–1122 (QLKV…FADP) and 1355–1414 (KFDV…FYEH). The disordered stretch occupies residues 1515–1589 (EEDKGRKETV…KPATPVPEVV (75 aa)). The span at 1540–1553 (NDKDREPKKSKPAE) shows a compositional bias: basic and acidic residues. Pro residues predominate over residues 1569-1584 (SPVPAEPAPVPKPATP). Tudor domains are found at residues 1662–1718 (NVVN…SHIE), 1839–1898 (GFEK…SLPS), 2023–2082 (KAAV…LIKP), 2211–2269 (TTNS…PIPS), and 2392–2451 (DLKE…KPAR).

May form part of a piRNA processing complex consisting of tud, aub and AGO3. Interacts with AGO3 (when symmetrically dimethylated on Arg residues) and aub (when symmetrically dimethylated on Arg residues). Interacts with vls. Interacts with me31B/DDX6 (when symmetrically dimethylated on Arg residues).

Its subcellular location is the cytoplasm. It is found in the perinuclear region. The protein localises to the cytoplasmic ribonucleoprotein granule. Functionally, may act via the Piwi-interacting RNA (piRNA) metabolic process mediated by aub and AGO3 Piwi proteins, which mediates the repression of transposable elements during meiosis by forming complexes composed of piRNAs and Piwi proteins and governs the methylation and subsequent repression of transposons. Required during oogenesis for the formation of primordial germ cells and for normal abdominal segmentation. Not involved in repression of retroelements. The chain is Protein tudor from Drosophila melanogaster (Fruit fly).